We begin with the raw amino-acid sequence, 351 residues long: Protein RecA (351 aa).

Position 73–80 (73–80) interacts with ATP; it reads GPESSGKT.

It belongs to the RecA family.

Its subcellular location is the cytoplasm. In terms of biological role, can catalyze the hydrolysis of ATP in the presence of single-stranded DNA, the ATP-dependent uptake of single-stranded DNA by duplex DNA, and the ATP-dependent hybridization of homologous single-stranded DNAs. It interacts with LexA causing its activation and leading to its autocatalytic cleavage. This chain is Protein RecA, found in Oleidesulfovibrio alaskensis (strain ATCC BAA-1058 / DSM 17464 / G20) (Desulfovibrio alaskensis).